A 216-amino-acid polypeptide reads, in one-letter code: Inorganic pyrophosphatase (216 aa).

Residues lysine 39, arginine 53, and tyrosine 65 each contribute to the substrate site. The Mg(2+) site is built by aspartate 93, aspartate 98, and aspartate 131. Tyrosine 168 serves as a coordination point for substrate.

It belongs to the PPase family. Homohexamer. It depends on Mg(2+) as a cofactor.

It is found in the cytoplasm. It carries out the reaction diphosphate + H2O = 2 phosphate + H(+). In terms of biological role, catalyzes the hydrolysis of inorganic pyrophosphate (PPi) forming two phosphate ions. This chain is Inorganic pyrophosphatase, found in Chlamydia caviae (strain ATCC VR-813 / DSM 19441 / 03DC25 / GPIC) (Chlamydophila caviae).